Here is a 149-residue protein sequence, read N- to C-terminus: Protein SprT-like (149 aa).

The SprT-like domain maps to 5–143; sequence DYVKQVSLED…CGLCRGKLLL (139 aa). H64 is a Zn(2+) binding site. E65 is a catalytic residue. A Zn(2+)-binding site is contributed by H68.

It belongs to the SprT family. Zn(2+) serves as cofactor.

It localises to the cytoplasm. The sequence is that of Protein SprT-like from Streptococcus pneumoniae (strain Hungary19A-6).